A 414-amino-acid chain; its full sequence is Gamma-glutamyl phosphate reductase (414 aa).

Belongs to the gamma-glutamyl phosphate reductase family.

The protein resides in the cytoplasm. It catalyses the reaction L-glutamate 5-semialdehyde + phosphate + NADP(+) = L-glutamyl 5-phosphate + NADPH + H(+). The protein operates within amino-acid biosynthesis; L-proline biosynthesis; L-glutamate 5-semialdehyde from L-glutamate: step 2/2. Functionally, catalyzes the NADPH-dependent reduction of L-glutamate 5-phosphate into L-glutamate 5-semialdehyde and phosphate. The product spontaneously undergoes cyclization to form 1-pyrroline-5-carboxylate. This Geobacillus kaustophilus (strain HTA426) protein is Gamma-glutamyl phosphate reductase.